The following is a 233-amino-acid chain: UPF0502 protein Mpe_A1449 (233 aa).

Belongs to the UPF0502 family.

This chain is UPF0502 protein Mpe_A1449, found in Methylibium petroleiphilum (strain ATCC BAA-1232 / LMG 22953 / PM1).